We begin with the raw amino-acid sequence, 427 residues long: Serine--tRNA ligase (427 aa).

235–237 (TAE) is a binding site for L-serine. ATP contacts are provided by residues 266–268 (RRE) and V282. E289 lines the L-serine pocket. Residue 353-356 (EASS) coordinates ATP. S389 contributes to the L-serine binding site.

This sequence belongs to the class-II aminoacyl-tRNA synthetase family. Type-1 seryl-tRNA synthetase subfamily. Homodimer. The tRNA molecule binds across the dimer.

Its subcellular location is the cytoplasm. The enzyme catalyses tRNA(Ser) + L-serine + ATP = L-seryl-tRNA(Ser) + AMP + diphosphate + H(+). The catalysed reaction is tRNA(Sec) + L-serine + ATP = L-seryl-tRNA(Sec) + AMP + diphosphate + H(+). It participates in aminoacyl-tRNA biosynthesis; selenocysteinyl-tRNA(Sec) biosynthesis; L-seryl-tRNA(Sec) from L-serine and tRNA(Sec): step 1/1. In terms of biological role, catalyzes the attachment of serine to tRNA(Ser). Is also able to aminoacylate tRNA(Sec) with serine, to form the misacylated tRNA L-seryl-tRNA(Sec), which will be further converted into selenocysteinyl-tRNA(Sec). This Chlorobaculum parvum (strain DSM 263 / NCIMB 8327) (Chlorobium vibrioforme subsp. thiosulfatophilum) protein is Serine--tRNA ligase.